We begin with the raw amino-acid sequence, 992 residues long: UvrABC system protein A (992 aa).

Polar residues predominate over residues methionine 1 to serine 11. The segment at methionine 1–glycine 30 is disordered. Residue glycine 62 to serine 69 coordinates ATP. A C4-type; atypical zinc finger spans residues cysteine 302–cysteine 330. ABC transporter domains follow at residues tryptophan 360–valine 639 and proline 659–alanine 988. Glycine 692–serine 699 lines the ATP pocket. Residues cysteine 791 to cysteine 817 form a C4-type zinc finger.

The protein belongs to the ABC transporter superfamily. UvrA family. As to quaternary structure, forms a heterotetramer with UvrB during the search for lesions.

It localises to the cytoplasm. Functionally, the UvrABC repair system catalyzes the recognition and processing of DNA lesions. UvrA is an ATPase and a DNA-binding protein. A damage recognition complex composed of 2 UvrA and 2 UvrB subunits scans DNA for abnormalities. When the presence of a lesion has been verified by UvrB, the UvrA molecules dissociate. This chain is UvrABC system protein A, found in Micrococcus luteus (Micrococcus lysodeikticus).